Reading from the N-terminus, the 300-residue chain is Ribosomal protein bS6--L-glutamate ligase (300 aa).

In terms of domain architecture, ATP-grasp spans 104–287 (MQLLARQGID…IAGKMIRWIE (184 aa)). Residues K141, 178-179 (EY), D187, and 211-213 (RSN) each bind ATP. Residues D248, E260, and N262 each contribute to the Mg(2+) site. Mn(2+)-binding residues include D248, E260, and N262.

It belongs to the RimK family. Requires Mg(2+) as cofactor. Mn(2+) serves as cofactor.

Functionally, an L-glutamate ligase that catalyzes the ATP-dependent post-translational addition of glutamate residues to the C-terminus of ribosomal protein bS6 (RpsF). Is also able to catalyze the synthesis of poly-alpha-glutamate in vitro, via ATP hydrolysis from unprotected glutamate as substrate. The number of glutamate residues added to either RpsF or to poly-alpha-glutamate changes with pH. This is Ribosomal protein bS6--L-glutamate ligase from Shigella boydii serotype 4 (strain Sb227).